The primary structure comprises 493 residues: Ketol-acid reductoisomerase (NADP(+)) (493 aa).

Positions 15 to 208 constitute a KARI N-terminal Rossmann domain; it reads AQLGKCRFMQ…GGDRAGVLES (194 aa). Residues 45–48, Arg-68, Arg-76, Ser-78, and 108–110 contribute to the NADP(+) site; these read CGAQ and DKQ. Residue His-132 is part of the active site. An NADP(+)-binding site is contributed by Gly-158. 2 KARI C-terminal knotted domains span residues 209–344 and 345–486; these read SFVA…NALA and FAGK…MKDM. Mg(2+) contacts are provided by Asp-217, Glu-221, Glu-389, and Glu-393. Residue Ser-414 participates in substrate binding.

The protein belongs to the ketol-acid reductoisomerase family. Mg(2+) serves as cofactor.

The enzyme catalyses (2R)-2,3-dihydroxy-3-methylbutanoate + NADP(+) = (2S)-2-acetolactate + NADPH + H(+). The catalysed reaction is (2R,3R)-2,3-dihydroxy-3-methylpentanoate + NADP(+) = (S)-2-ethyl-2-hydroxy-3-oxobutanoate + NADPH + H(+). It participates in amino-acid biosynthesis; L-isoleucine biosynthesis; L-isoleucine from 2-oxobutanoate: step 2/4. Its pathway is amino-acid biosynthesis; L-valine biosynthesis; L-valine from pyruvate: step 2/4. In terms of biological role, involved in the biosynthesis of branched-chain amino acids (BCAA). Catalyzes an alkyl-migration followed by a ketol-acid reduction of (S)-2-acetolactate (S2AL) to yield (R)-2,3-dihydroxy-isovalerate. In the isomerase reaction, S2AL is rearranged via a Mg-dependent methyl migration to produce 3-hydroxy-3-methyl-2-ketobutyrate (HMKB). In the reductase reaction, this 2-ketoacid undergoes a metal-dependent reduction by NADPH to yield (R)-2,3-dihydroxy-isovalerate. This is Ketol-acid reductoisomerase (NADP(+)) from Aeromonas salmonicida (strain A449).